A 94-amino-acid polypeptide reads, in one-letter code: Co-chaperonin GroES (94 aa).

The protein belongs to the GroES chaperonin family. In terms of assembly, heptamer of 7 subunits arranged in a ring. Interacts with the chaperonin GroEL.

The protein localises to the cytoplasm. In terms of biological role, together with the chaperonin GroEL, plays an essential role in assisting protein folding. The GroEL-GroES system forms a nano-cage that allows encapsulation of the non-native substrate proteins and provides a physical environment optimized to promote and accelerate protein folding. GroES binds to the apical surface of the GroEL ring, thereby capping the opening of the GroEL channel. The protein is Co-chaperonin GroES of Lactobacillus helveticus (strain DPC 4571).